Here is a 262-residue protein sequence, read N- to C-terminus: (2Z,6E)-farnesyl diphosphate synthase (262 aa).

The active site involves aspartate 40. Aspartate 40 is a Mg(2+) binding site. Substrate-binding positions include 41 to 44, tryptophan 45, and 86 to 88; these read GNRR and STE. Asparagine 89 (proton acceptor) is an active-site residue. Residues arginine 92, arginine 211, and 217-219 each bind substrate; that span reads RLS. Glutamate 230 serves as a coordination point for Mg(2+).

The protein belongs to the UPP synthase family. Z-FPP synthase subfamily. As to quaternary structure, homodimer. Mg(2+) serves as cofactor.

The protein localises to the cytoplasm. It is found in the cell membrane. The catalysed reaction is isopentenyl diphosphate + (2E)-geranyl diphosphate = (2Z,6E)-farnesyl diphosphate + diphosphate. Functionally, catalyzes the condensation of only one isopentenyl pyrophosphate (IPP) unit in the cis configuration to E-geranyl diphosphate (E-GPP) generating the 15 carbon product (2Z,6E)-farnesyl diphosphate (Z-FPP or EZ-FPP). Z-FPP is the precursor of decaprenyl diphosphate, which has a central role in the biosynthesis of the mycobacterial cell wall. The polypeptide is (2Z,6E)-farnesyl diphosphate synthase (Mycobacterium tuberculosis (strain CDC 1551 / Oshkosh)).